A 98-amino-acid polypeptide reads, in one-letter code: NADH-ubiquinone oxidoreductase chain 4L (98 aa).

3 consecutive transmembrane segments (helical) span residues 1–21 (MSLV…GLLM), 29–49 (SLLC…LTIL), and 61–81 (IILL…LVMV).

This sequence belongs to the complex I subunit 4L family. In terms of assembly, core subunit of respiratory chain NADH dehydrogenase (Complex I) which is composed of 45 different subunits.

Its subcellular location is the mitochondrion inner membrane. The enzyme catalyses a ubiquinone + NADH + 5 H(+)(in) = a ubiquinol + NAD(+) + 4 H(+)(out). Functionally, core subunit of the mitochondrial membrane respiratory chain NADH dehydrogenase (Complex I) which catalyzes electron transfer from NADH through the respiratory chain, using ubiquinone as an electron acceptor. Part of the enzyme membrane arm which is embedded in the lipid bilayer and involved in proton translocation. The chain is NADH-ubiquinone oxidoreductase chain 4L (MT-ND4L) from Elaphodus cephalophus (Tufted deer).